The sequence spans 113 residues: Hydrogenase maturation factor HypA (113 aa).

Residue histidine 2 coordinates Ni(2+). Zn(2+) is bound by residues cysteine 73, cysteine 75, cysteine 89, and cysteine 92.

The protein belongs to the HypA/HybF family.

Involved in the maturation of [NiFe] hydrogenases. Required for nickel insertion into the metal center of the hydrogenase. The sequence is that of Hydrogenase maturation factor HypA from Methanocella arvoryzae (strain DSM 22066 / NBRC 105507 / MRE50).